The following is a 559-amino-acid chain: Actin-binding protein WASF1 (559 aa).

3 disordered regions span residues 169-202 (TEDK…DRRR), 307-400 (RPQS…SPPV), and 412-492 (VHPL…STLP). Positions 182 to 202 (KNLDRPHEPEKVPRAPHDRRR) are enriched in basic and acidic residues. Positions 322-332 (PTPPPPPPPLP) are enriched in pro residues. A compositionally biased stretch (low complexity) spans 333–346 (SALSTSSLRASMTS). R341 carries the asymmetric dimethylarginine; alternate modification. An Omega-N-methylarginine; alternate modification is found at R341. 4 stretches are compositionally biased toward pro residues: residues 347–374 (TPPP…PPAP), 384–399 (PAPP…PSPP), 423–437 (LPPP…PPGI), and 458–477 (TPSP…PPSQ). Position 489 is a phosphoserine (S489). One can recognise a WH2 domain in the interval 497 to 514 (ARSVLLEAIRKGIQLRKV).

Belongs to the SCAR/WAVE family. In terms of assembly, component of the WAVE1 complex composed of ABI2, CYFIP1 or CYFIP2, BRK1, NCKAP1 and WASF1/WAVE1. Within the complex, a heterodimer containing NCKAP1 and CYFIP1 interacts with a heterotrimer formed by WAVE1, ABI2 and BRK1. CYFIP2 binds to activated RAC1 which causes the complex to dissociate, releasing activated WASF1. The complex can also be activated by NCK1. Binds actin and the Arp2/3 complex. Interacts with BAIAP2. Interacts with SHANK3; the interaction mediates the association of SHANK3 with the WAVE1 complex. Interacts with ABI1 (via N-terminus). Interacts with SORBS2; this interaction greatly enhances phosphorylation by ABL1 and dephosphorylation by PTPN12 and might mediate partial to focal adhesion sites. Expressed in hippocampal neurons (at protein level).

Its subcellular location is the cytoplasm. The protein localises to the cytoskeleton. The protein resides in the synapse. It localises to the cell junction. It is found in the focal adhesion. Downstream effector molecule involved in the transmission of signals from tyrosine kinase receptors and small GTPases to the actin cytoskeleton. Promotes formation of actin filaments. Part of the WAVE complex that regulates lamellipodia formation. The WAVE complex regulates actin filament reorganization via its interaction with the Arp2/3 complex. As component of the WAVE1 complex, required for BDNF-NTRK2 endocytic trafficking and signaling from early endosomes. Also involved in the regulation of mitochondrial dynamics. The protein is Actin-binding protein WASF1 (Wasf1) of Rattus norvegicus (Rat).